The following is a 166-amino-acid chain: Protein-export protein SecB (166 aa).

Over residues 1 to 16 (MTDTSAAGNPTPGQQP) the composition is skewed to polar residues. Positions 1-21 (MTDTSAAGNPTPGQQPANPPS) are disordered.

This sequence belongs to the SecB family. As to quaternary structure, homotetramer, a dimer of dimers. One homotetramer interacts with 1 SecA dimer.

Its subcellular location is the cytoplasm. One of the proteins required for the normal export of preproteins out of the cell cytoplasm. It is a molecular chaperone that binds to a subset of precursor proteins, maintaining them in a translocation-competent state. It also specifically binds to its receptor SecA. The sequence is that of Protein-export protein SecB from Hyphomonas neptunium (strain ATCC 15444).